A 21-amino-acid chain; its full sequence is Apolipophorin 2 (21 aa).

In terms of tissue distribution, expressed in hemolymph.

Its subcellular location is the secreted. Its function is as follows. Constitutes the major component of lipophorin, which mediates transport for various types of lipids in hemolymph. Acts by forming lipoprotein particles that bind lipoproteins and lipids. The chain is Apolipophorin 2 from Galleria mellonella (Greater wax moth).